The chain runs to 249 residues: ATP synthase subunit a, chloroplastic (249 aa).

The next 5 membrane-spanning stretches (helical) occupy residues 40-60, 97-117, 136-156, 201-221, and 222-242; these read QVLI…VLAI, VPFI…GALL, INTT…AGLS, LVVV…VMFL, and GLFT…AYIG.

Belongs to the ATPase A chain family. F-type ATPases have 2 components, CF(1) - the catalytic core - and CF(0) - the membrane proton channel. CF(1) has five subunits: alpha(3), beta(3), gamma(1), delta(1), epsilon(1). CF(0) has four main subunits: a, b, b' and c.

Its subcellular location is the plastid. The protein resides in the chloroplast thylakoid membrane. In terms of biological role, key component of the proton channel; it plays a direct role in the translocation of protons across the membrane. In Lepidium virginicum (Virginia pepperweed), this protein is ATP synthase subunit a, chloroplastic.